Here is a 682-residue protein sequence, read N- to C-terminus: Tail-specific protease (682 aa).

Positions 1-22 (MNMFFRLTALAGLLAIAGQTFA) are cleaved as a signal peptide. The region spanning 238-322 (NTEMSLSLEG…SKVRLEILPA (85 aa)) is the PDZ domain. Active-site charge relay system residues include Ser452, Asp463, and Lys477. Residues 635 to 650 (GKPELKKLDDLPKDYQ) are compositionally biased toward basic and acidic residues. Residues 635–654 (GKPELKKLDDLPKDYQEPDP) are disordered.

The protein belongs to the peptidase S41A family.

It localises to the cell inner membrane. It carries out the reaction The enzyme shows specific recognition of a C-terminal tripeptide, Xaa-Yaa-Zaa, in which Xaa is preferably Ala or Leu, Yaa is preferably Ala or Tyr, and Zaa is preferably Ala, but then cleaves at a variable distance from the C-terminus. A typical cleavage is -Ala-Ala-|-Arg-Ala-Ala-Lys-Glu-Asn-Tyr-Ala-Leu-Ala-Ala.. Functionally, involved in the cleavage of a C-terminal peptide of 11 residues from the precursor form of penicillin-binding protein 3 (PBP3). May be involved in protection of the bacterium from thermal and osmotic stresses. The chain is Tail-specific protease (prc) from Escherichia coli (strain K12).